A 418-amino-acid chain; its full sequence is Secernin-3 (418 aa).

The propeptide occupies 1-5 (MEPYS). Residue C6 is part of the active site. Residue C6 is modified to Glyoxylic acid (Cys); alternate. C6 is subject to Pyruvic acid (Cys); alternate.

It belongs to the peptidase C69 family. Secernin subfamily.

Its function is as follows. Plays a role in thermal nociception. This Mus musculus (Mouse) protein is Secernin-3 (Scrn3).